A 346-amino-acid polypeptide reads, in one-letter code: Phosphoribosylformylglycinamidine cyclo-ligase (346 aa).

The protein belongs to the AIR synthase family.

It is found in the cytoplasm. The catalysed reaction is 2-formamido-N(1)-(5-O-phospho-beta-D-ribosyl)acetamidine + ATP = 5-amino-1-(5-phospho-beta-D-ribosyl)imidazole + ADP + phosphate + H(+). It participates in purine metabolism; IMP biosynthesis via de novo pathway; 5-amino-1-(5-phospho-D-ribosyl)imidazole from N(2)-formyl-N(1)-(5-phospho-D-ribosyl)glycinamide: step 2/2. The protein is Phosphoribosylformylglycinamidine cyclo-ligase of Vibrio parahaemolyticus serotype O3:K6 (strain RIMD 2210633).